The chain runs to 714 residues: FERM domain-containing protein 7 (714 aa).

Residues 2 to 282 form the FERM domain; it reads LHLKVQFLDD…EYHAFFRLSE (281 aa). A coiled-coil region spans residues 537-558; it reads NIRMKSFQQDLQVLQEAIARTS.

In terms of tissue distribution, expressed in liver, kidney, pancreas and at low levels in brain and heart. Expressed in embryonic brain and developing neural retina.

The protein localises to the cell projection. Its subcellular location is the neuron projection. It is found in the growth cone. Plays a role in neurite development, may be through the activation of the GTPase RAC1. Plays a role in the control of eye movement and gaze stability. This chain is FERM domain-containing protein 7 (FRMD7), found in Homo sapiens (Human).